Here is a 101-residue protein sequence, read N- to C-terminus: Interleukin-8 (101 aa).

A signal peptide spans 1-22; sequence MTSKLAVALLAAFVLSAALCEA. The residue at position 27 (arginine 27) is a Citrulline. 2 disulfide bridges follow: cysteine 34–cysteine 61 and cysteine 36–cysteine 77.

This sequence belongs to the intercrine alpha (chemokine CxC) family. Homodimer. Interacts with TNFAIP6 (via Link domain); this interaction interferes with chemokine binding to glycosaminoglycans. Citrullination at Arg-27 prevents proteolysis, and dampens tissue inflammation, it also enhances leukocytosis, possibly through impaired chemokine clearance from the blood circulation.

It localises to the secreted. Its function is as follows. Chemotactic factor that mediates inflammatory response by attracting neutrophils, basophils, and T-cells to clear pathogens and protect the host from infection. Also plays an important role in neutrophil activation. Released in response to an inflammatory stimulus, exerts its effect by binding to the G-protein-coupled receptors CXCR1 and CXCR2, primarily found in neutrophils, monocytes and endothelial cells. G-protein heterotrimer (alpha, beta, gamma subunits) constitutively binds to CXCR1/CXCR2 receptor and activation by IL8 leads to beta and gamma subunits release from Galpha (GNAI2 in neutrophils) and activation of several downstream signaling pathways including PI3K and MAPK pathways. This chain is Interleukin-8 (CXCL8), found in Canis lupus familiaris (Dog).